Consider the following 189-residue polypeptide: Casparian strip membrane protein 2 (189 aa).

The segment at 1 to 21 (MKVSTIESGEISKGASSPRKG) is disordered. Over 1 to 25 (MKVSTIESGEISKGASSPRKGMKRG) the chain is Cytoplasmic. The helical transmembrane segment at 26-46 (LSIMDFILRIFAAMSTLGSAL) threads the bilayer. Residues 47 to 73 (SMGTAKQTMPFATRFVRFKVSFHDLPT) are Extracellular-facing. The chain crosses the membrane as a helical span at residues 74-94 (FLFFVTANSIVCGYLALSLVL). Residues 95–108 (SFFHIVRTISVKSR) lie on the Cytoplasmic side of the membrane. A helical transmembrane segment spans residues 109 to 129 (ILLVFLDTVMFGLLTSGASAA). Residues 130–163 (AAIVYVAHYGNPSANWFPFCQQYNSFCGRISGSL) lie on the Extracellular side of the membrane. Residues 164–184 (VGSFIAVVIFMILILMSGISI) traverse the membrane as a helical segment. Topologically, residues 185–189 (SKSKH) are cytoplasmic.

It belongs to the Casparian strip membrane proteins (CASP) family. In terms of assembly, homodimer and heterodimers.

It is found in the cell membrane. Regulates membrane-cell wall junctions and localized cell wall deposition. Required for establishment of the Casparian strip membrane domain (CSD) and the subsequent formation of Casparian strips, a cell wall modification of the root endodermis that determines an apoplastic barrier between the intraorganismal apoplasm and the extraorganismal apoplasm and prevents lateral diffusion. The protein is Casparian strip membrane protein 2 of Medicago truncatula (Barrel medic).